Here is a 992-residue protein sequence, read N- to C-terminus: Tubulin glycylase 3A (992 aa).

Disordered stretches follow at residues 1 to 54 and 68 to 113; these read MQTR…NRVV and QSDS…LGAP. The span at 7–26 shows a compositional bias: basic and acidic residues; it reads SEPHRSRDQVTDGDRNRDQP. Over residues 39-49 the composition is skewed to pro residues; that stretch reads VTPPAAPPPTP. Positions 295–645 constitute a TTL domain; that stretch reads FKLTACVAFL…RRTDPKAELG (351 aa). Residues 457 to 460, lysine 470, and aspartate 472 each bind ATP; that span reads QKYI. Disordered regions lie at residues 746–766 and 791–828; these read SLCS…TATP and KRNT…PVES. Over residues 794–807 the composition is skewed to polar residues; it reads TGGSLSGEQVQSTA.

The protein resides in the cytoplasm. The protein localises to the cytoskeleton. Functionally, polylycylase which modifies alpha- and beta-tubulin, generating side chains of glycine on the gamma-carboxyl groups of specific glutamate residues within the C-terminal tail of alpha- and beta-tubulin. Involved both in the side-chain initiation and elongation steps of the polyglycylation reaction by adding a single glycine chain to generate monoglycine side chains and by elongating monoglycine side chains to polyglycine side chains. The protein is Tubulin glycylase 3A (TTLL3A) of Drosophila melanogaster (Fruit fly).